The primary structure comprises 716 residues: Ciliary WD repeat-containing protein ctxp80 (716 aa).

The interval 1 to 53 is disordered; that stretch reads MGCGGSSGASDPSSEKINWNNAEIHDEFKQEQKKAGAKRKAFDKTTGKAVEKE. Polar residues predominate over residues 8–21; sequence GASDPSSEKINWNN. The span at 23 to 53 shows a compositional bias: basic and acidic residues; that stretch reads EIHDEFKQEQKKAGAKRKAFDKTTGKAVEKE. WD repeat units lie at residues 167–208, 213–254, 257–297, 305–343, 345–382, 424–462, 529–568, 571–610, 639–678, and 683–715; these read YHTN…KKGR, KGGR…QVKK, SGPD…FKKK, GKPT…STYD, HGKG…AEKT, HSDG…STAL, DSGE…KLGT, AHNS…QDPS, TDGT…GATP, and GHSE…QWKK.

This sequence belongs to the WD repeat EMAP family.

The polypeptide is Ciliary WD repeat-containing protein ctxp80 (Euplotoides octocarinatus (Freshwater ciliate)).